We begin with the raw amino-acid sequence, 171 residues long: NADH-quinone oxidoreductase subunit B (171 aa).

Residues Cys39, Cys40, Cys105, and Cys134 each contribute to the [4Fe-4S] cluster site.

This sequence belongs to the complex I 20 kDa subunit family. In terms of assembly, NDH-1 is composed of 14 different subunits. Subunits NuoB, C, D, E, F, and G constitute the peripheral sector of the complex. The cofactor is [4Fe-4S] cluster.

It is found in the cell inner membrane. It carries out the reaction a quinone + NADH + 5 H(+)(in) = a quinol + NAD(+) + 4 H(+)(out). In terms of biological role, NDH-1 shuttles electrons from NADH, via FMN and iron-sulfur (Fe-S) centers, to quinones in the respiratory chain. The immediate electron acceptor for the enzyme in this species is believed to be ubiquinone. Couples the redox reaction to proton translocation (for every two electrons transferred, four hydrogen ions are translocated across the cytoplasmic membrane), and thus conserves the redox energy in a proton gradient. This Aliarcobacter butzleri (strain RM4018) (Arcobacter butzleri) protein is NADH-quinone oxidoreductase subunit B.